The primary structure comprises 425 residues: tRNA(Met) cytidine acetate ligase (425 aa).

ATP contacts are provided by residues 7-20, glycine 102, asparagine 165, and 190-191; these read IVEY…HLYH and RI.

It belongs to the TmcAL family.

It is found in the cytoplasm. It catalyses the reaction cytidine(34) in elongator tRNA(Met) + acetate + ATP = N(4)-acetylcytidine(34) in elongator tRNA(Met) + AMP + diphosphate. Catalyzes the formation of N(4)-acetylcytidine (ac(4)C) at the wobble position of elongator tRNA(Met), using acetate and ATP as substrates. First activates an acetate ion to form acetyladenylate (Ac-AMP) and then transfers the acetyl group to tRNA to form ac(4)C34. This chain is tRNA(Met) cytidine acetate ligase, found in Thermosipho melanesiensis (strain DSM 12029 / CIP 104789 / BI429).